A 188-amino-acid polypeptide reads, in one-letter code: Adenine phosphoribosyltransferase (188 aa).

It belongs to the purine/pyrimidine phosphoribosyltransferase family. Homodimer.

The protein localises to the cytoplasm. It catalyses the reaction AMP + diphosphate = 5-phospho-alpha-D-ribose 1-diphosphate + adenine. The protein operates within purine metabolism; AMP biosynthesis via salvage pathway; AMP from adenine: step 1/1. Catalyzes a salvage reaction resulting in the formation of AMP, that is energically less costly than de novo synthesis. This is Adenine phosphoribosyltransferase from Salinispora arenicola (strain CNS-205).